Here is a 372-residue protein sequence, read N- to C-terminus: Lipoyl synthase, mitochondrial (372 aa).

A mitochondrion-targeting transit peptide spans 1-27 (MSLRCGGAVRTVGPRVFGRYVFSPVRE). Positions 106, 111, 117, 137, 141, 144, and 352 each coordinate [4Fe-4S] cluster. A Radical SAM core domain is found at 122-341 (EYATATATIM…EKVGNELGFH (220 aa)).

This sequence belongs to the radical SAM superfamily. Lipoyl synthase family. The cofactor is [4Fe-4S] cluster.

It localises to the mitochondrion. The enzyme catalyses [[Fe-S] cluster scaffold protein carrying a second [4Fe-4S](2+) cluster] + N(6)-octanoyl-L-lysyl-[protein] + 2 oxidized [2Fe-2S]-[ferredoxin] + 2 S-adenosyl-L-methionine + 4 H(+) = [[Fe-S] cluster scaffold protein] + N(6)-[(R)-dihydrolipoyl]-L-lysyl-[protein] + 4 Fe(3+) + 2 hydrogen sulfide + 2 5'-deoxyadenosine + 2 L-methionine + 2 reduced [2Fe-2S]-[ferredoxin]. It functions in the pathway protein modification; protein lipoylation via endogenous pathway; protein N(6)-(lipoyl)lysine from octanoyl-[acyl-carrier-protein]: step 2/2. Its function is as follows. Catalyzes the radical-mediated insertion of two sulfur atoms into the C-6 and C-8 positions of the octanoyl moiety bound to the lipoyl domains of lipoate-dependent enzymes, thereby converting the octanoylated domains into lipoylated derivatives. This Bos taurus (Bovine) protein is Lipoyl synthase, mitochondrial.